A 48-amino-acid polypeptide reads, in one-letter code: ATP synthase protein 8 (48 aa).

The helical transmembrane segment at 13–32 threads the bilayer; it reads VVFTLISLSFIFFVFSKYIL.

Belongs to the ATPase protein 8 family. F-type ATPases have 2 components, CF(1) - the catalytic core - and CF(0) - the membrane proton channel.

Its subcellular location is the mitochondrion membrane. Mitochondrial membrane ATP synthase (F(1)F(0) ATP synthase or Complex V) produces ATP from ADP in the presence of a proton gradient across the membrane which is generated by electron transport complexes of the respiratory chain. F-type ATPases consist of two structural domains, F(1) - containing the extramembraneous catalytic core and F(0) - containing the membrane proton channel, linked together by a central stalk and a peripheral stalk. During catalysis, ATP synthesis in the catalytic domain of F(1) is coupled via a rotary mechanism of the central stalk subunits to proton translocation. Part of the complex F(0) domain. Minor subunit located with subunit a in the membrane. The sequence is that of ATP synthase protein 8 (ATP8) from Trichophyton rubrum (Athlete's foot fungus).